A 375-amino-acid polypeptide reads, in one-letter code: 23S rRNA (uracil(747)-C(5))-methyltransferase RlmC (375 aa).

Positions 3, 11, 14, and 87 each coordinate [4Fe-4S] cluster. Glutamine 212, phenylalanine 241, glutamate 262, and asparagine 307 together coordinate S-adenosyl-L-methionine. The Nucleophile role is filled by cysteine 334.

This sequence belongs to the class I-like SAM-binding methyltransferase superfamily. RNA M5U methyltransferase family. RlmC subfamily.

It catalyses the reaction uridine(747) in 23S rRNA + S-adenosyl-L-methionine = 5-methyluridine(747) in 23S rRNA + S-adenosyl-L-homocysteine + H(+). Catalyzes the formation of 5-methyl-uridine at position 747 (m5U747) in 23S rRNA. In Escherichia coli O7:K1 (strain IAI39 / ExPEC), this protein is 23S rRNA (uracil(747)-C(5))-methyltransferase RlmC.